Here is a 157-residue protein sequence, read N- to C-terminus: Ubiquitin-like protein 4A (157 aa).

Residues 1 to 76 enclose the Ubiquitin-like domain; that stretch reads MQLTVKALQG…LNLVVKPLEK (76 aa). Lys48 is covalently cross-linked (Glycyl lysine isopeptide (Lys-Gly) (interchain with G-Cter in ubiquitin)). Ser90 is modified (phosphoserine). The segment at 96–138 is required and sufficient for interaction with BAG6; it reads WQLISKVLARHFSAADASRVLEQLQRDYERSLSRLTLDDIERL.

In terms of assembly, component of the BAG6/BAT3 complex, at least composed of BAG6, UBL4A and GET4/TRC35. Interacts with BAG6; the interaction is direct and required for UBL4A protein stability. Interacts with USP13; may be indirect via BAG6. In terms of processing, polyubiquitinated. Ubiquitination by AMFR and deubiquitination by USP13 may regulate the interaction between the BAG6/BAT complex and SGTA and therefore may regulate client proteins fate.

It is found in the cytoplasm. The protein resides in the cytosol. It localises to the nucleus. Functionally, as part of a cytosolic protein quality control complex, the BAG6/BAT3 complex, maintains misfolded and hydrophobic patches-containing proteins in a soluble state and participates in their proper delivery to the endoplasmic reticulum or alternatively can promote their sorting to the proteasome where they undergo degradation. The BAG6/BAT3 complex is involved in the post-translational delivery of tail-anchored/type II transmembrane proteins to the endoplasmic reticulum membrane. Recruited to ribosomes, it interacts with the transmembrane region of newly synthesized tail-anchored proteins and together with SGTA and ASNA1 mediates their delivery to the endoplasmic reticulum. Client proteins that cannot be properly delivered to the endoplasmic reticulum are ubiquitinated and sorted to the proteasome. Similarly, the BAG6/BAT3 complex also functions as a sorting platform for proteins of the secretory pathway that are mislocalized to the cytosol either delivering them to the proteasome for degradation or to the endoplasmic reticulum. The BAG6/BAT3 complex also plays a role in the endoplasmic reticulum-associated degradation (ERAD), a quality control mechanism that eliminates unwanted proteins of the endoplasmic reticulum through their retrotranslocation to the cytosol and their targeting to the proteasome. It maintains these retrotranslocated proteins in an unfolded yet soluble state condition in the cytosol to ensure their proper delivery to the proteasome. In Callithrix jacchus (White-tufted-ear marmoset), this protein is Ubiquitin-like protein 4A (UBL4A).